A 368-amino-acid chain; its full sequence is tRNA(Met) cytidine acetate ligase (368 aa).

Residues 7-20 (IAEF…HKYL), Gly-96, Asn-152, and Arg-175 contribute to the ATP site.

This sequence belongs to the TmcAL family.

Its subcellular location is the cytoplasm. It catalyses the reaction cytidine(34) in elongator tRNA(Met) + acetate + ATP = N(4)-acetylcytidine(34) in elongator tRNA(Met) + AMP + diphosphate. Functionally, catalyzes the formation of N(4)-acetylcytidine (ac(4)C) at the wobble position of elongator tRNA(Met), using acetate and ATP as substrates. First activates an acetate ion to form acetyladenylate (Ac-AMP) and then transfers the acetyl group to tRNA to form ac(4)C34. This Streptococcus pyogenes serotype M49 (strain NZ131) protein is tRNA(Met) cytidine acetate ligase.